Consider the following 483-residue polypeptide: GTPase Obg (483 aa).

The Obg domain maps to 2 to 159; that stretch reads SRFIDRVVLH…RDLVLELKSV (158 aa). An OBG-type G domain is found at 160 to 340; sequence ADVGLLGFPS…LTFALAKMVR (181 aa). GTP contacts are provided by residues 166–173, 191–195, 212–215, 292–295, and 321–323; these read GFPSAGKS, FTTLV, DVPG, NKTD, and SAV. Mg(2+) is bound by residues S173 and T193. The region spanning 358 to 438 is the OCT domain; sequence PVKVKDSSFT…IGDVSFEWEP (81 aa).

Belongs to the TRAFAC class OBG-HflX-like GTPase superfamily. OBG GTPase family. In terms of assembly, monomer. It depends on Mg(2+) as a cofactor.

The protein resides in the cytoplasm. In terms of biological role, an essential GTPase which binds GTP, GDP and possibly (p)ppGpp with moderate affinity, with high nucleotide exchange rates and a fairly low GTP hydrolysis rate. Plays a role in control of the cell cycle, stress response, ribosome biogenesis and in those bacteria that undergo differentiation, in morphogenesis control. The sequence is that of GTPase Obg from Rhodococcus erythropolis (strain PR4 / NBRC 100887).